A 95-amino-acid polypeptide reads, in one-letter code: Aspartyl/glutamyl-tRNA(Asn/Gln) amidotransferase subunit C (95 aa).

The protein belongs to the GatC family. Heterotrimer of A, B and C subunits.

It carries out the reaction L-glutamyl-tRNA(Gln) + L-glutamine + ATP + H2O = L-glutaminyl-tRNA(Gln) + L-glutamate + ADP + phosphate + H(+). The enzyme catalyses L-aspartyl-tRNA(Asn) + L-glutamine + ATP + H2O = L-asparaginyl-tRNA(Asn) + L-glutamate + ADP + phosphate + 2 H(+). Its function is as follows. Allows the formation of correctly charged Asn-tRNA(Asn) or Gln-tRNA(Gln) through the transamidation of misacylated Asp-tRNA(Asn) or Glu-tRNA(Gln) in organisms which lack either or both of asparaginyl-tRNA or glutaminyl-tRNA synthetases. The reaction takes place in the presence of glutamine and ATP through an activated phospho-Asp-tRNA(Asn) or phospho-Glu-tRNA(Gln). In Pseudomonas putida (strain W619), this protein is Aspartyl/glutamyl-tRNA(Asn/Gln) amidotransferase subunit C.